The primary structure comprises 378 residues: Decaprenyl-diphosphate synthase subunit 1 (378 aa).

Residues Lys-72, Arg-75, and His-130 each coordinate isopentenyl diphosphate. The Mg(2+) site is built by Asp-137 and Asp-141. Arg-147 is a binding site for isopentenyl diphosphate.

The protein belongs to the FPP/GGPP synthase family. As to quaternary structure, heterotetramer of 2 dps1 and 2 dlp1 subunits. It depends on Mg(2+) as a cofactor.

It localises to the mitochondrion. It catalyses the reaction 7 isopentenyl diphosphate + (2E,6E)-farnesyl diphosphate = all-trans-decaprenyl diphosphate + 7 diphosphate. It participates in cofactor biosynthesis; ubiquinone biosynthesis. Its function is as follows. Supplies decaprenyl diphosphate, the precursor for the side chain of the isoprenoid quinones ubiquinone-10. This is Decaprenyl-diphosphate synthase subunit 1 (dps1) from Schizosaccharomyces pombe (strain 972 / ATCC 24843) (Fission yeast).